The sequence spans 186 residues: dITP/XTP pyrophosphatase (186 aa).

Residue 7–12 (TSNPGK) coordinates substrate. 2 residues coordinate Mg(2+): Glu36 and Asp65. The active-site Proton acceptor is Asp65. Residues Ser66, 140–143 (FGYD), Lys163, and 168–169 (HR) each bind substrate.

The protein belongs to the HAM1 NTPase family. In terms of assembly, homodimer. Requires Mg(2+) as cofactor. Mn(2+) serves as cofactor.

The enzyme catalyses XTP + H2O = XMP + diphosphate + H(+). It carries out the reaction dITP + H2O = dIMP + diphosphate + H(+). The catalysed reaction is ITP + H2O = IMP + diphosphate + H(+). Its function is as follows. Pyrophosphatase that catalyzes the hydrolysis of nucleoside triphosphates to their monophosphate derivatives, with a high preference for the non-canonical purine nucleotides XTP (xanthosine triphosphate), dITP (deoxyinosine triphosphate) and ITP. Seems to function as a house-cleaning enzyme that removes non-canonical purine nucleotides from the nucleotide pool, thus preventing their incorporation into DNA/RNA and avoiding chromosomal lesions. The sequence is that of dITP/XTP pyrophosphatase from Pyrococcus horikoshii (strain ATCC 700860 / DSM 12428 / JCM 9974 / NBRC 100139 / OT-3).